Here is a 911-residue protein sequence, read N- to C-terminus: Isoleucine--tRNA ligase (911 aa).

Residues 57–67 (PYANGDIHMGH) carry the 'HIGH' region motif. Residue E551 participates in L-isoleucyl-5'-AMP binding. A 'KMSKS' region motif is present at residues 592–596 (KMSKS). Residue K595 participates in ATP binding. Residues C881, C884, C901, and C904 each contribute to the Zn(2+) site.

Belongs to the class-I aminoacyl-tRNA synthetase family. IleS type 1 subfamily. As to quaternary structure, monomer. Zn(2+) is required as a cofactor.

It localises to the cytoplasm. It carries out the reaction tRNA(Ile) + L-isoleucine + ATP = L-isoleucyl-tRNA(Ile) + AMP + diphosphate. Functionally, catalyzes the attachment of isoleucine to tRNA(Ile). As IleRS can inadvertently accommodate and process structurally similar amino acids such as valine, to avoid such errors it has two additional distinct tRNA(Ile)-dependent editing activities. One activity is designated as 'pretransfer' editing and involves the hydrolysis of activated Val-AMP. The other activity is designated 'posttransfer' editing and involves deacylation of mischarged Val-tRNA(Ile). This Exiguobacterium sibiricum (strain DSM 17290 / CCUG 55495 / CIP 109462 / JCM 13490 / 255-15) protein is Isoleucine--tRNA ligase.